A 447-amino-acid polypeptide reads, in one-letter code: MKPVIALVGRPNVGKSTLFNRLTKSRDAIVADFAGLTRDRHYGNGKLGKHEYIVIDTGGFEPDASSGIYREMAKQTQQAVAEADVVIFVVDARAGLSAQDHDIANYLRRLGKPCLLVGNKAEGMREGVQLAEFYELGLGEVLPVSAAHGQGVRSMLESALDTLQLPEPEDEPEDGEDKPIRLAVAGRPNVGKSTLINTWLGEERLVAFDMPGTTRDAISVPFERNGQQFELIDTAGLRRKGKVFEAIEKFSVVKTLQAIESANVVLLLLDATQGVTDQDAHIAGYILESGRAVVLAVNKWDAVDDYGRQMLERSIETRLSFLKFASLHFISAKKRQGLGPLWTSIAQAHKAATCKMPTPVLTRLLLEAVQFQAPKRSGMFRPKMRYAHQGGMNPPVIVIHGNSLEHVTDAYKRFLEGRFRKEFDLVGTPLRIEMKTSRNPFAEDSDA.

2 consecutive EngA-type G domains span residues 3-167 and 180-353; these read PVIA…QLPE and IRLA…KAAT. GTP-binding positions include 9 to 16, 56 to 60, 119 to 122, 186 to 193, 233 to 237, and 298 to 301; these read GRPNVGKS, DTGGF, NKAE, DTAGL, and NKWD. Residues 353–438 enclose the KH-like domain; the sequence is TCKMPTPVLT…PLRIEMKTSR (86 aa).

This sequence belongs to the TRAFAC class TrmE-Era-EngA-EngB-Septin-like GTPase superfamily. EngA (Der) GTPase family. As to quaternary structure, associates with the 50S ribosomal subunit.

In terms of biological role, GTPase that plays an essential role in the late steps of ribosome biogenesis. The chain is GTPase Der from Paracidovorax citrulli (strain AAC00-1) (Acidovorax citrulli).